A 175-amino-acid chain; its full sequence is Peptide deformylase (175 aa).

2 residues coordinate Fe cation: cysteine 98 and histidine 140. The active site involves glutamate 141. Histidine 144 is a Fe cation binding site.

It belongs to the polypeptide deformylase family. Fe(2+) serves as cofactor.

It catalyses the reaction N-terminal N-formyl-L-methionyl-[peptide] + H2O = N-terminal L-methionyl-[peptide] + formate. Functionally, removes the formyl group from the N-terminal Met of newly synthesized proteins. Requires at least a dipeptide for an efficient rate of reaction. N-terminal L-methionine is a prerequisite for activity but the enzyme has broad specificity at other positions. This chain is Peptide deformylase, found in Bradyrhizobium sp. (strain BTAi1 / ATCC BAA-1182).